Consider the following 214-residue polypeptide: Putative pit accessory protein (214 aa).

The protein belongs to the UPF0111 family.

Its function is as follows. Could be involved in orthophosphate transport. The protein is Putative pit accessory protein of Rhizobium meliloti (strain 1021) (Ensifer meliloti).